Consider the following 294-residue polypeptide: 33 kDa chaperonin (294 aa).

Intrachain disulfides connect C238–C240 and C271–C274.

The protein belongs to the HSP33 family. Post-translationally, under oxidizing conditions two disulfide bonds are formed involving the reactive cysteines. Under reducing conditions zinc is bound to the reactive cysteines and the protein is inactive.

Its subcellular location is the cytoplasm. Functionally, redox regulated molecular chaperone. Protects both thermally unfolding and oxidatively damaged proteins from irreversible aggregation. Plays an important role in the bacterial defense system toward oxidative stress. The protein is 33 kDa chaperonin of Staphylococcus haemolyticus (strain JCSC1435).